The chain runs to 421 residues: MAATLSVEPTGRSCWDEPLSIAVRGLAPEQPVTLRSVLRDEKGALFRAHARYRADSHGELDLARVPALGGSFSGLEPMGLLWAMEPDRPFWRLIKRDVQTPFLVELEVLDGHEPDGGRRLARTVHERHFMAPGVRRVPVREGRVRATLFLPPGQGPFPGIIDVYGVGGGLLEYRAGLVAGHGFATLALAFYDFEDLPKELNVIEVDYFEEAVRYMLRHPKVKGPDIGLLGLSLGADVCLIMASFLNNVSATVSINGSAFSGNRHIKYKQTMIPPLGHDLRRMKVAFSGILDIVDIRNDAVGGCENPSMIPIEKAKGPILFVAGQDDHCWRSELYTQIASDRLQAHGKERPQVLSYPGTGHYIEPPYFPMCPASLHKIVNEAVIWGGEVKAHSKAQIDAWKQILFFFGKHLGSTHSRASCRL.

Ser-232 serves as the catalytic Charge relay system. Position 313 is an N6-succinyllysine (Lys-313). Active-site charge relay system residues include Asp-326 and His-360. A Microbody targeting signal motif is present at residues 419 to 421 (CRL).

This sequence belongs to the C/M/P thioester hydrolase family. As to expression, mainly expressed in liver and kidney. Weakly expressed in other tissues including intestine, adrenal gland and adipose tissues.

It localises to the peroxisome. It carries out the reaction succinyl-CoA + H2O = succinate + CoA + H(+). The catalysed reaction is glutaryl-CoA + H2O = glutarate + CoA + H(+). Its pathway is lipid metabolism; fatty acid metabolism. Functionally, catalyzes the hydrolysis of acyl-CoAs into free fatty acids and coenzyme A (CoASH), regulating their respective intracellular levels. In contrast to its human ortholog, functions essentially as a succinyl-CoA thioesterase with no activity with medium to long chain saturated acyl-CoAs and with a low activity toward glutaryl-CoA. In Mus musculus (Mouse), this protein is Peroxisomal succinyl-coenzyme A thioesterase (Acot4).